The chain runs to 359 residues: Opine dehydrogenase (359 aa).

The protein belongs to the lysopine/nopaline/octopine/opine/vitopine dehydrogenases family. In terms of assembly, homodimer.

The enzyme catalyses (2S)-2-[(R)-1-carboxyethylamino]pentanoate + NAD(+) + H2O = L-2-aminopentanoate + pyruvate + NADH + H(+). Its function is as follows. In the forward direction also acts on secondary amine dicarboxylates such as N-(1-carboxyethyl)methionine and N-(1-carboxyethyl)phenylalanine. In the reverse direction, the enzyme also acts on neutral amino acids as an amino donor. They include L-amino acids such as 2-aminopentanoic acid, 2-aminobutyric acid, 2-aminohexanoic acid, 3-chloroalanine, O-acetylserine, methionine, isoleucine, valine, phenylalanine, leucine and alanine. The protein is Opine dehydrogenase (odh) of Arthrobacter sp. (strain 1C).